A 101-amino-acid polypeptide reads, in one-letter code: Immunity protein CdiI-2 (101 aa).

In terms of assembly, specifically interacts with the truncated CT fragment of cognate toxin protein CdiA-2, which inhibits CdiA-2 tRNA nuclease activity.

In terms of biological role, immunity protein component of a toxin-immunity protein module, which functions as a cellular contact-dependent growth inhibition (CDI) system. CDI modules allow bacteria to communicate with and inhibit the growth of closely related neighboring bacteria in a contact-dependent fashion. Neutralizes the toxic activity of cognate toxin CdiA (C-terminal 301 residue CT fragment) upon expression in E.coli. Does not inhibit toxic activity of CdiA from other strains of B.pseudomallei. Its function is as follows. Expression of this cdiAIB locus in B.thailandensis confers protection against other bacteria carrying the locus; growth inhibition requires cellular contact. The sequence is that of Immunity protein CdiI-2 (cdiI2) from Burkholderia pseudomallei (strain 1026b).